The chain runs to 384 residues: Cytochrome b (384 aa).

4 helical membrane passes run 32-52 (LGSL…FLAM), 76-98 (WLIR…IHIG), 113-133 (VWTV…LGYC), and 179-199 (FFTF…MHLM). Residues H82 and H96 each coordinate heme b. Heme b contacts are provided by H183 and H197. Position 202 (H202) interacts with a ubiquinone. Helical transmembrane passes span 225 to 245 (FIFK…LFVF), 289 to 309 (LGGV…PITD), 321 to 341 (LSKF…KLGE), and 348 to 368 (FILM…ILVP).

The protein belongs to the cytochrome b family. Fungal cytochrome b-c1 complex contains 10 subunits; 3 respiratory subunits, 2 core proteins and 5 low-molecular weight proteins. Cytochrome b-c1 complex is a homodimer. Requires heme b as cofactor.

The protein localises to the mitochondrion inner membrane. Functionally, component of the ubiquinol-cytochrome c reductase complex (complex III or cytochrome b-c1 complex) that is part of the mitochondrial respiratory chain. The b-c1 complex mediates electron transfer from ubiquinol to cytochrome c. Contributes to the generation of a proton gradient across the mitochondrial membrane that is then used for ATP synthesis. This is Cytochrome b (COB) from Eremothecium gossypii (strain ATCC 10895 / CBS 109.51 / FGSC 9923 / NRRL Y-1056) (Yeast).